The sequence spans 272 residues: Phosphate import ATP-binding protein PstB (272 aa).

The 240-residue stretch at 18-257 folds into the ABC transporter domain; it reads VSIQNATISY…FNDTDKIFNA (240 aa). 50-57 lines the ATP pocket; the sequence is GPSGCGKS.

Belongs to the ABC transporter superfamily. Phosphate importer (TC 3.A.1.7) family. The complex is composed of two ATP-binding proteins (PstB), two transmembrane proteins (PstC and PstA) and a solute-binding protein (PstS).

The protein localises to the cell inner membrane. It carries out the reaction phosphate(out) + ATP + H2O = ADP + 2 phosphate(in) + H(+). Its function is as follows. Part of the ABC transporter complex PstSACB involved in phosphate import. Responsible for energy coupling to the transport system. This chain is Phosphate import ATP-binding protein PstB, found in Synechococcus sp. (strain CC9311).